A 280-amino-acid polypeptide reads, in one-letter code: Energy-coupling factor transporter ATP-binding protein EcfA1 (280 aa).

The ABC transporter domain maps to 6 to 241; it reads LRIENISFQY…SHMLQEIGLD (236 aa). Residue 40–47 participates in ATP binding; the sequence is GQNGSGKS.

Belongs to the ABC transporter superfamily. Energy-coupling factor EcfA family. In terms of assembly, forms a stable energy-coupling factor (ECF) transporter complex composed of 2 membrane-embedded substrate-binding proteins (S component), 2 ATP-binding proteins (A component) and 2 transmembrane proteins (T component).

The protein resides in the cell membrane. Functionally, ATP-binding (A) component of a common energy-coupling factor (ECF) ABC-transporter complex. Unlike classic ABC transporters this ECF transporter provides the energy necessary to transport a number of different substrates. The protein is Energy-coupling factor transporter ATP-binding protein EcfA1 of Bacillus cereus (strain ATCC 14579 / DSM 31 / CCUG 7414 / JCM 2152 / NBRC 15305 / NCIMB 9373 / NCTC 2599 / NRRL B-3711).